A 101-amino-acid polypeptide reads, in one-letter code: NAD(P)H-quinone oxidoreductase subunit 4L, chloroplastic (101 aa).

3 helical membrane passes run 2–22, 32–52, and 61–81; these read ILEHVLVLSAYLFSIGIYGLI, MCLELILNAVNINFVTFSDFF, and IFSIFVIAIAAAEAAIGPAIL.

It belongs to the complex I subunit 4L family. In terms of assembly, NDH is composed of at least 16 different subunits, 5 of which are encoded in the nucleus.

The protein localises to the plastid. It is found in the chloroplast thylakoid membrane. It catalyses the reaction a plastoquinone + NADH + (n+1) H(+)(in) = a plastoquinol + NAD(+) + n H(+)(out). The catalysed reaction is a plastoquinone + NADPH + (n+1) H(+)(in) = a plastoquinol + NADP(+) + n H(+)(out). Its function is as follows. NDH shuttles electrons from NAD(P)H:plastoquinone, via FMN and iron-sulfur (Fe-S) centers, to quinones in the photosynthetic chain and possibly in a chloroplast respiratory chain. The immediate electron acceptor for the enzyme in this species is believed to be plastoquinone. Couples the redox reaction to proton translocation, and thus conserves the redox energy in a proton gradient. This Platanus occidentalis (Sycamore) protein is NAD(P)H-quinone oxidoreductase subunit 4L, chloroplastic.